The sequence spans 816 residues: Sucrose synthase 1 (816 aa).

Positions 280 to 757 (MVFNVVIMSP…GLQRIEEKYT (478 aa)) are GT-B glycosyltransferase.

It belongs to the glycosyltransferase 1 family. Plant sucrose synthase subfamily. In terms of assembly, homotetramer or heterotetramer with SUS2. Expressed in root phloem and leaf mesophyll. Expressed in phloem tissues and aleurone layers of seeds and at lower levels in the pericarp and endosperm cells (at protein level). Predominantly expressed in elongating tissues including roots, developing leaves and internodes.

It catalyses the reaction an NDP-alpha-D-glucose + D-fructose = a ribonucleoside 5'-diphosphate + sucrose + H(+). Its function is as follows. Sucrose-cleaving enzyme that provides UDP-glucose and fructose for various metabolic pathways. This chain is Sucrose synthase 1 (SUS1), found in Oryza sativa subsp. japonica (Rice).